Reading from the N-terminus, the 281-residue chain is Pre T-cell antigen receptor alpha (281 aa).

The N-terminal stretch at 1 to 23 (MAGTWLLLLLALGCPALPTGVGG) is a signal peptide. Topologically, residues 24-146 (TPFPSLAPPI…QEPLRGTPGG (123 aa)) are extracellular. A disulfide bridge links Cys47 with Cys107. N-linked (GlcNAc...) asparagine glycosylation is present at Asn67. The helical transmembrane segment at 147–167 (ALWLGVLRLLLFKLLLFDLLL) threads the bilayer. The Cytoplasmic portion of the chain corresponds to 168–281 (TCSCLCDPAG…LPPPLQAGAA (114 aa)). The segment at 196–233 (LHPATETGGREATSSPRPQPRDRRWGDTPPGRKPGSPV) is disordered.

Heterodimer with TCRB; disulfide linked. This heterodimer assembles with CD3 proteins into a signaling-competent pre-T-cell receptor complex. Interacts with RHBDD1. Expressed in immature but not mature T-cells. Also found in CD34+ cells from peripheral blood, CD34+ precursors from umbilical cord blood and adult bone marrow.

Its subcellular location is the membrane. The protein resides in the cell membrane. Its function is as follows. Component of the pre-T-cell receptor complex (composed of PTCRA, TCRB and the CD3 complex) that has a crucial role in early T-cell development, particularly alpha-beta T cell differentiation. The protein is Pre T-cell antigen receptor alpha of Homo sapiens (Human).